The sequence spans 418 residues: Enolase 1 (418 aa).

Position 162 (glutamine 162) interacts with (2R)-2-phosphoglycerate. The active-site Proton donor is glutamate 204. Residues aspartate 241, glutamate 285, and aspartate 312 each coordinate Mg(2+). Residues lysine 337, arginine 366, serine 367, and lysine 388 each coordinate (2R)-2-phosphoglycerate. Lysine 337 functions as the Proton acceptor in the catalytic mechanism.

This sequence belongs to the enolase family. The cofactor is Mg(2+).

It is found in the cytoplasm. The protein resides in the secreted. The protein localises to the cell surface. The enzyme catalyses (2R)-2-phosphoglycerate = phosphoenolpyruvate + H2O. The protein operates within carbohydrate degradation; glycolysis; pyruvate from D-glyceraldehyde 3-phosphate: step 4/5. Functionally, catalyzes the reversible conversion of 2-phosphoglycerate (2-PG) into phosphoenolpyruvate (PEP). It is essential for the degradation of carbohydrates via glycolysis. The chain is Enolase 1 from Lactococcus lactis subsp. cremoris (strain SK11).